The following is a 451-amino-acid chain: Phosphoglucosamine mutase (451 aa).

Residue Ser-103 is the Phosphoserine intermediate of the active site. Residues Ser-103, Asp-243, Asp-245, and Asp-247 each coordinate Mg(2+). Phosphoserine is present on Ser-103.

It belongs to the phosphohexose mutase family. Requires Mg(2+) as cofactor. In terms of processing, activated by phosphorylation.

It carries out the reaction alpha-D-glucosamine 1-phosphate = D-glucosamine 6-phosphate. In terms of biological role, catalyzes the conversion of glucosamine-6-phosphate to glucosamine-1-phosphate. The protein is Phosphoglucosamine mutase of Lactobacillus johnsonii (strain CNCM I-12250 / La1 / NCC 533).